Reading from the N-terminus, the 373-residue chain is 8-amino-7-oxononanoate synthase (373 aa).

Residue R16 participates in substrate binding. Position 93–94 (93–94) interacts with pyridoxal 5'-phosphate; the sequence is GF. Residue H118 participates in substrate binding. Pyridoxal 5'-phosphate is bound by residues S165, 190–193, and 222–225; these read DEAH and TFSK. K225 bears the N6-(pyridoxal phosphate)lysine mark. Residue T334 coordinates substrate.

The protein belongs to the class-II pyridoxal-phosphate-dependent aminotransferase family. BioF subfamily. As to quaternary structure, homodimer. Requires pyridoxal 5'-phosphate as cofactor.

It catalyses the reaction 6-carboxyhexanoyl-[ACP] + L-alanine + H(+) = (8S)-8-amino-7-oxononanoate + holo-[ACP] + CO2. It participates in cofactor biosynthesis; biotin biosynthesis. Its function is as follows. Catalyzes the decarboxylative condensation of pimeloyl-[acyl-carrier protein] and L-alanine to produce 8-amino-7-oxononanoate (AON), [acyl-carrier protein], and carbon dioxide. The protein is 8-amino-7-oxononanoate synthase of Helicobacter pylori (strain ATCC 700392 / 26695) (Campylobacter pylori).